An 820-amino-acid polypeptide reads, in one-letter code: Phospholipase D alpha 3 (820 aa).

The C2 domain maps to 1-133 (MTEQLLLHGT…ITGQPIDRWL (133 aa)). Asp194 serves as a coordination point for Ca(2+). A PLD phosphodiesterase 1 domain is found at 334–371 (TMFTHHQKTIVVDSEVDGSLTKRRIVSFLGGIDLCDGR). Catalysis depends on residues His339, Lys341, and Asp346. His339 contacts a 1,2-diacyl-sn-glycero-3-phosphate. Residues His377 and His411 each coordinate Ca(2+). A 1,2-diacyl-sn-glycero-3-phosphate-binding residues include Gln528 and His667. Residues 662–689 (FMIYVHSKMMIVDDEYIIIGSANINQRS) form the PLD phosphodiesterase 2 domain. Catalysis depends on residues His667, Lys669, and Asp674. Glu730 contributes to the Ca(2+) binding site.

Belongs to the phospholipase D family. C2-PLD subfamily. Ca(2+) serves as cofactor. Expressed in buds, flowers, siliques, stems, old leaves and roots. Expressed in the sieve elements.

It is found in the cytoplasm. The protein localises to the membrane. It carries out the reaction a 1,2-diacyl-sn-glycero-3-phosphocholine + H2O = a 1,2-diacyl-sn-glycero-3-phosphate + choline + H(+). Hydrolyzes glycerol-phospholipids at the terminal phosphodiesteric bond to generate phosphatidic acids (PA). Active with phosphatidylcholine (PC), phosphatidylethanolamine (PE), phosphatidylglycerol (PG), and phosphatidylserine (PS) as substrates. No activity toward phosphatidylinositol (PI) or PIP2. Positively mediates plant responses to hyperosmotic stresses and promotes root growth, flowering, and stress avoidance. Not involved in the abscisic acid regulation of stomatal movement and transpirational water loss. The polypeptide is Phospholipase D alpha 3 (Arabidopsis thaliana (Mouse-ear cress)).